Here is a 452-residue protein sequence, read N- to C-terminus: Friend leukemia integration 1 transcription factor (452 aa).

Phosphoserine is present on serine 39. The region spanning 112-198 (PPPPNMTTNE…SHLTYLRESS (87 aa)) is the PNT domain. Over residues 202–214 (YNTTSHTDPSSRL) the composition is skewed to polar residues. Residues 202–272 (YNTTSHTDPS…YQILGPTSSR (71 aa)) form a disordered region. Residues 215–226 (NVKEDPSYDSVR) are compositionally biased toward basic and acidic residues. Positions 248–257 (QTMSKNTEQR) are enriched in polar residues. The ETS DNA-binding region spans 281–361 (IQLWQFLLEL…HGKRYAYKFD (81 aa)).

This sequence belongs to the ETS family. As to quaternary structure, can form homodimers or heterodimers with ETV6/TEL1.

The protein resides in the nucleus. Sequence-specific transcriptional activator. Recognizes the DNA sequence 5'-C[CA]GGAAGT-3'. The polypeptide is Friend leukemia integration 1 transcription factor (FLI1) (Bos taurus (Bovine)).